The following is a 545-amino-acid chain: Chaperonin GroEL 1 (545 aa).

Residues 29-32 (TLGP), 86-90 (DGTTT), Gly413, 479-481 (DAA), and Asp495 contribute to the ATP site. Residues 525–545 (PEPKENNPAGSGAGMGGDFDY) form a disordered region. Residues 535-545 (SGAGMGGDFDY) are compositionally biased toward gly residues.

This sequence belongs to the chaperonin (HSP60) family. As to quaternary structure, forms a cylinder of 14 subunits composed of two heptameric rings stacked back-to-back. Interacts with the co-chaperonin GroES.

The protein resides in the cytoplasm. The catalysed reaction is ATP + H2O + a folded polypeptide = ADP + phosphate + an unfolded polypeptide.. In terms of biological role, together with its co-chaperonin GroES, plays an essential role in assisting protein folding. The GroEL-GroES system forms a nano-cage that allows encapsulation of the non-native substrate proteins and provides a physical environment optimized to promote and accelerate protein folding. The sequence is that of Chaperonin GroEL 1 from Thermosynechococcus vestitus (strain NIES-2133 / IAM M-273 / BP-1).